A 290-amino-acid chain; its full sequence is Pantothenate synthetase (290 aa).

Residue 34 to 41 participates in ATP binding; it reads MGNLHDGH. The active-site Proton donor is histidine 41. (R)-pantoate is bound at residue glutamine 65. Glutamine 65 serves as a coordination point for beta-alanine. 156–159 provides a ligand contact to ATP; that stretch reads GKKD. (R)-pantoate is bound at residue glutamine 162. ATP-binding positions include alanine 185 and 193-196; that span reads LSSR.

The protein belongs to the pantothenate synthetase family. Homodimer.

Its subcellular location is the cytoplasm. The catalysed reaction is (R)-pantoate + beta-alanine + ATP = (R)-pantothenate + AMP + diphosphate + H(+). It participates in cofactor biosynthesis; (R)-pantothenate biosynthesis; (R)-pantothenate from (R)-pantoate and beta-alanine: step 1/1. Catalyzes the condensation of pantoate with beta-alanine in an ATP-dependent reaction via a pantoyl-adenylate intermediate. The protein is Pantothenate synthetase of Acidovorax ebreus (strain TPSY) (Diaphorobacter sp. (strain TPSY)).